Reading from the N-terminus, the 1863-residue chain is E3 ubiquitin-protein ligase ubr3 (1863 aa).

The UBR-type zinc-finger motif lies at 80–151; it reads TLCGLVWTAN…ESGFCNRHRL (72 aa). 3 disordered regions span residues 302-330, 970-995, and 1128-1152; these read LDDSSKEEDQDGLQGVGQRKRVKLSSSTK, PEVERKRERERERETPPSTSSESATF, and IPPKKISPGDKKSMDKEERRQRARE. Composition is skewed to basic and acidic residues over residues 971 to 984 and 1134 to 1152; these read EVERKRERERERET and SPGDKKSMDKEERRQRARE. The RING-type; degenerate zinc-finger motif lies at 1270–1328; it reads DSSCLQSVSIGWDGGVYVQTCGHTLHIDCHKSYMESLRNDQVLQGISVDKGEFTCPLCR.

The protein belongs to the E3 ubiquitin-protein ligase UBR1-like family.

It carries out the reaction S-ubiquitinyl-[E2 ubiquitin-conjugating enzyme]-L-cysteine + [acceptor protein]-L-lysine = [E2 ubiquitin-conjugating enzyme]-L-cysteine + N(6)-ubiquitinyl-[acceptor protein]-L-lysine.. The protein operates within protein modification; protein ubiquitination. E3 ubiquitin-protein ligase which is a component of the N-end rule pathway. Recognizes and binds to proteins bearing specific N-terminal residues, leading to their ubiquitination and subsequent degradation. Positively regulates hedgehog/shh-signaling pathways that function in eye development, neuronal specification and somite development. Activation of shh up-regulates transcription of ubr3, which in turn promotes hedgehog/shh signaling possibly by controlling negative regulators such as Kif7. The sequence is that of E3 ubiquitin-protein ligase ubr3 from Danio rerio (Zebrafish).